The following is a 286-amino-acid chain: Flagellar filament 33 kDa core protein (286 aa).

It belongs to the bacterial flagellin family. As to quaternary structure, the flagellum consists of an outer layer composed of repeating units of FlaA around a core that contains several antigenically related polypeptides.

It localises to the periplasmic flagellum. The protein resides in the periplasm. Component of the core of the flagella. The chain is Flagellar filament 33 kDa core protein from Treponema phagedenis.